Here is a 1448-residue protein sequence, read N- to C-terminus: Sister chromatid cohesion protein PDS5 homolog B-A (1448 aa).

The HEAT repeat unit spans residues 383 to 419; sequence LLVNDQLLNFVRERTLDKRWRVRKEAMMGLAQIYKKY. The span at 1141–1155 shows a compositional bias: polar residues; the sequence is AGKQMLSKSSRMETV. Positions 1141–1448 are disordered; the sequence is AGKQMLSKSS…TGRLRSAKKR (308 aa). Low complexity predominate over residues 1156–1168; sequence SNASSGSNPSSPG. Over residues 1177 to 1186 the composition is skewed to acidic residues; that stretch reads MELDQSENED. Basic and acidic residues-rich tracts occupy residues 1196–1214, 1233–1243, and 1264–1273; these read KKSD…LEKP, ELSKPAQEPKS, and WQEKRLKEDL. The segment covering 1285–1294 has biased composition (basic residues); that stretch reads KKGRRGRPPK. Positions 1286–1298 form a DNA-binding region, a.T hook 1; the sequence is KGRRGRPPKSAKM. Positions 1324 to 1341 are enriched in acidic residues; the sequence is PTDEDDHLEISEEQDFEN. Residues 1346 to 1356 are compositionally biased toward basic residues; sequence RKGRGSSRRTP. 2 DNA-binding regions (a.T hook) span residues 1374 to 1386 and 1390 to 1402; these read QKRR…TPTV and KSHV…VVSK. Over residues 1389–1399 the composition is skewed to basic residues; the sequence is KKSHVGRPRKV.

The protein belongs to the PDS5 family. Interacts with the cohesin complex. In terms of processing, phosphorylated in mitotic cells.

Its subcellular location is the nucleus. Plays a role in androgen-induced proliferative arrest. Required for maintenance of sister chromatid cohesion during mitosis. The protein is Sister chromatid cohesion protein PDS5 homolog B-A (pds5b-a) of Xenopus laevis (African clawed frog).